A 180-amino-acid chain; its full sequence is uncharacterized protein (180 aa).

The Macro domain maps to 1-180 (MVEFEIVKGD…KDYERALRAV (180 aa)).

This is an uncharacterized protein from Thermococcus kodakarensis (strain ATCC BAA-918 / JCM 12380 / KOD1) (Pyrococcus kodakaraensis (strain KOD1)).